The sequence spans 359 residues: 4-hydroxy-2-oxovalerate aldolase 1 (359 aa).

A Pyruvate carboxyltransferase domain is found at 23 to 275 (VRVTDTSLRD…KTGIDFFDIA (253 aa)). 31–32 (RD) is a substrate binding site. Asp32 contacts Mn(2+). Catalysis depends on His35, which acts as the Proton acceptor. The substrate site is built by Ser185 and His214. Mn(2+) is bound by residues His214 and His216. Tyr305 is a binding site for substrate.

The protein belongs to the 4-hydroxy-2-oxovalerate aldolase family.

The catalysed reaction is (S)-4-hydroxy-2-oxopentanoate = acetaldehyde + pyruvate. This chain is 4-hydroxy-2-oxovalerate aldolase 1, found in Mycobacteroides abscessus (strain ATCC 19977 / DSM 44196 / CCUG 20993 / CIP 104536 / JCM 13569 / NCTC 13031 / TMC 1543 / L948) (Mycobacterium abscessus).